Reading from the N-terminus, the 73-residue chain is Translation initiation factor IF-1 (73 aa).

In terms of domain architecture, S1-like spans 1-72; the sequence is MAKDDVIEVE…TKGRITYRFI (72 aa).

Belongs to the IF-1 family. In terms of assembly, component of the 30S ribosomal translation pre-initiation complex which assembles on the 30S ribosome in the order IF-2 and IF-3, IF-1 and N-formylmethionyl-tRNA(fMet); mRNA recruitment can occur at any time during PIC assembly.

It is found in the cytoplasm. One of the essential components for the initiation of protein synthesis. Stabilizes the binding of IF-2 and IF-3 on the 30S subunit to which N-formylmethionyl-tRNA(fMet) subsequently binds. Helps modulate mRNA selection, yielding the 30S pre-initiation complex (PIC). Upon addition of the 50S ribosomal subunit IF-1, IF-2 and IF-3 are released leaving the mature 70S translation initiation complex. This chain is Translation initiation factor IF-1, found in Lactobacillus acidophilus (strain ATCC 700396 / NCK56 / N2 / NCFM).